A 213-amino-acid polypeptide reads, in one-letter code: MPIMLNFSNGRILPESEVEALRNVARSNQSDVLLVGSRSLRLHHISFMDGFSVEPIPGSFLDRIGERRHRRLAESLERQLNGGSSFLQAFSQYIEQTSSAPPLQESVRNEVQSRVNSYAFSVNPGDFPCSVLHLSCPITLCVPETGVFVKNARCSKVCSLYDISALTEMLRRNASHPLSREAFTPGMIVHKEECNFNTTEQHFCILPRSDTRL.

Positions 136–189 are RING/U-box domain; the sequence is CPITLCVPETGVFVKNARCSKVCSLYDISALTEMLRRNASHPLSREAFTPGMIV. The short motif at 211-213 is the PDZ-binding motif element; the sequence is TRL.

It belongs to the NleG E3 ligase family. As to quaternary structure, interacts with host GOPC (human protein).

Its subcellular location is the secreted. The protein localises to the host cytoplasm. It catalyses the reaction S-ubiquitinyl-[E2 ubiquitin-conjugating enzyme]-L-cysteine + [acceptor protein]-L-lysine = [E2 ubiquitin-conjugating enzyme]-L-cysteine + N(6)-ubiquitinyl-[acceptor protein]-L-lysine.. In terms of biological role, effector proteins function to alter host cell physiology and promote bacterial survival in host tissues. This protein is an E3 ubiquitin-protein ligase that probably interferes with the host's ubiquitination pathway and targets host proteins for proteasomal degradation. Mice infected with a strain of bacteria deleted for this gene had an increased survival rate. Can be ubiquitinylated, and ubiquitinate ubiquitin, giving rise to polyubiquitin chains (in vitro). The protein is E3 ubiquitin-protein ligase NleG8 of Citrobacter rodentium.